Here is a 149-residue protein sequence, read N- to C-terminus: Large ribosomal subunit protein eL19 (149 aa).

Positions 67-90 are disordered; it reads KRKLQKRKGRRRGHGSRKGAKGAR.

The protein belongs to the eukaryotic ribosomal protein eL19 family. As to quaternary structure, part of the 50S ribosomal subunit.

Binds to the 23S rRNA. The polypeptide is Large ribosomal subunit protein eL19 (Archaeoglobus fulgidus (strain ATCC 49558 / DSM 4304 / JCM 9628 / NBRC 100126 / VC-16)).